The primary structure comprises 348 residues: uncharacterized protein (348 aa).

The NADP(+) site is built by Lys-41 and Tyr-170. Ser-339 bears the Phosphoserine mark.

Belongs to the NAD(P)-dependent epimerase/dehydratase family. Dihydroflavonol-4-reductase subfamily.

This is an uncharacterized protein from Saccharomyces cerevisiae (strain ATCC 204508 / S288c) (Baker's yeast).